The following is a 107-amino-acid chain: Phosphoribosyl-ATP pyrophosphatase (107 aa).

Belongs to the PRA-PH family.

Its subcellular location is the cytoplasm. The enzyme catalyses 1-(5-phospho-beta-D-ribosyl)-ATP + H2O = 1-(5-phospho-beta-D-ribosyl)-5'-AMP + diphosphate + H(+). Its pathway is amino-acid biosynthesis; L-histidine biosynthesis; L-histidine from 5-phospho-alpha-D-ribose 1-diphosphate: step 2/9. The sequence is that of Phosphoribosyl-ATP pyrophosphatase (hisE) from Caulobacter vibrioides (strain ATCC 19089 / CIP 103742 / CB 15) (Caulobacter crescentus).